We begin with the raw amino-acid sequence, 578 residues long: 2-succinyl-5-enolpyruvyl-6-hydroxy-3-cyclohexene-1-carboxylate synthase (578 aa).

The protein belongs to the TPP enzyme family. MenD subfamily. As to quaternary structure, homodimer. It depends on Mg(2+) as a cofactor. Mn(2+) is required as a cofactor. The cofactor is thiamine diphosphate.

It carries out the reaction isochorismate + 2-oxoglutarate + H(+) = 5-enolpyruvoyl-6-hydroxy-2-succinyl-cyclohex-3-ene-1-carboxylate + CO2. Its pathway is quinol/quinone metabolism; 1,4-dihydroxy-2-naphthoate biosynthesis; 1,4-dihydroxy-2-naphthoate from chorismate: step 2/7. It participates in quinol/quinone metabolism; menaquinone biosynthesis. Functionally, catalyzes the thiamine diphosphate-dependent decarboxylation of 2-oxoglutarate and the subsequent addition of the resulting succinic semialdehyde-thiamine pyrophosphate anion to isochorismate to yield 2-succinyl-5-enolpyruvyl-6-hydroxy-3-cyclohexene-1-carboxylate (SEPHCHC). In Bacillus velezensis (strain DSM 23117 / BGSC 10A6 / LMG 26770 / FZB42) (Bacillus amyloliquefaciens subsp. plantarum), this protein is 2-succinyl-5-enolpyruvyl-6-hydroxy-3-cyclohexene-1-carboxylate synthase.